Consider the following 599-residue polypeptide: Aspartate--tRNA(Asp/Asn) ligase (599 aa).

Residue Glu-172 participates in L-aspartate binding. The tract at residues 196-199 (QLFK) is aspartate. Arg-218 contacts L-aspartate. ATP contacts are provided by residues 218–220 (RDE) and Gln-227. Position 451 (His-451) interacts with L-aspartate. Glu-485 lines the ATP pocket. Arg-492 is a binding site for L-aspartate. Position 537–540 (537–540 (GLDR)) interacts with ATP.

The protein belongs to the class-II aminoacyl-tRNA synthetase family. Type 1 subfamily. As to quaternary structure, homodimer.

The protein localises to the cytoplasm. It carries out the reaction tRNA(Asx) + L-aspartate + ATP = L-aspartyl-tRNA(Asx) + AMP + diphosphate. In terms of biological role, aspartyl-tRNA synthetase with relaxed tRNA specificity since it is able to aspartylate not only its cognate tRNA(Asp) but also tRNA(Asn). Reaction proceeds in two steps: L-aspartate is first activated by ATP to form Asp-AMP and then transferred to the acceptor end of tRNA(Asp/Asn). This chain is Aspartate--tRNA(Asp/Asn) ligase, found in Aromatoleum aromaticum (strain DSM 19018 / LMG 30748 / EbN1) (Azoarcus sp. (strain EbN1)).